We begin with the raw amino-acid sequence, 161 residues long: MKLSEISDNPGARKKRMRIGRGIGSGKGKTGGRGGKGQTARSGVRIKGFEGGQMPLHRRLPKRGFNNIFRLEFAEINLDRLQDAIDAKTIDAGAVINAESLVAAGVLRRSRDGVRLLGRGELKAKLTIEVHGATKSAIEAVEKAGGSVKILAPKKDEGEAA.

Positions 1–43 are disordered; the sequence is MKLSEISDNPGARKKRMRIGRGIGSGKGKTGGRGGKGQTARSG. The span at 21 to 37 shows a compositional bias: gly residues; that stretch reads RGIGSGKGKTGGRGGKG.

The protein belongs to the universal ribosomal protein uL15 family. As to quaternary structure, part of the 50S ribosomal subunit.

Its function is as follows. Binds to the 23S rRNA. The protein is Large ribosomal subunit protein uL15 of Rhodopseudomonas palustris (strain HaA2).